The following is a 257-amino-acid chain: uncharacterized protein (257 aa).

Residue 7–14 (GKGGVGKT) coordinates ATP.

It to M.jannaschii MJ0084 and MJ0685.

This is an uncharacterized protein from Methanocaldococcus jannaschii (strain ATCC 43067 / DSM 2661 / JAL-1 / JCM 10045 / NBRC 100440) (Methanococcus jannaschii).